A 226-amino-acid polypeptide reads, in one-letter code: Uracil-DNA glycosylase (226 aa).

Asp-64 (proton acceptor) is an active-site residue.

The protein belongs to the uracil-DNA glycosylase (UDG) superfamily. UNG family.

It localises to the cytoplasm. The enzyme catalyses Hydrolyzes single-stranded DNA or mismatched double-stranded DNA and polynucleotides, releasing free uracil.. In terms of biological role, excises uracil residues from the DNA which can arise as a result of misincorporation of dUMP residues by DNA polymerase or due to deamination of cytosine. In Fusobacterium nucleatum subsp. nucleatum (strain ATCC 25586 / DSM 15643 / BCRC 10681 / CIP 101130 / JCM 8532 / KCTC 2640 / LMG 13131 / VPI 4355), this protein is Uracil-DNA glycosylase.